A 296-amino-acid chain; its full sequence is Light-independent protochlorophyllide reductase iron-sulfur ATP-binding protein (296 aa).

Residues 10–15 (GIGKST) and Lys39 each bind ATP. Ser14 contributes to the Mg(2+) binding site. Cys95 and Cys129 together coordinate [4Fe-4S] cluster. 180–181 (NR) is a binding site for ATP.

The protein belongs to the NifH/BchL/ChlL family. Homodimer. Protochlorophyllide reductase is composed of three subunits; ChlL, ChlN and ChlB. Requires [4Fe-4S] cluster as cofactor.

It localises to the plastid. The protein resides in the chloroplast. It carries out the reaction chlorophyllide a + oxidized 2[4Fe-4S]-[ferredoxin] + 2 ADP + 2 phosphate = protochlorophyllide a + reduced 2[4Fe-4S]-[ferredoxin] + 2 ATP + 2 H2O. It participates in porphyrin-containing compound metabolism; chlorophyll biosynthesis (light-independent). Functionally, component of the dark-operative protochlorophyllide reductase (DPOR) that uses Mg-ATP and reduced ferredoxin to reduce ring D of protochlorophyllide (Pchlide) to form chlorophyllide a (Chlide). This reaction is light-independent. The L component serves as a unique electron donor to the NB-component of the complex, and binds Mg-ATP. The chain is Light-independent protochlorophyllide reductase iron-sulfur ATP-binding protein from Mesostigma viride (Green alga).